We begin with the raw amino-acid sequence, 633 residues long: Probable potassium transport system protein Kup 2 (633 aa).

The next 12 membrane-spanning stretches (helical) occupy residues 18-38 (FLALTIGAIGVVYGDIGTSPL), 61-81 (LVSLVLWTLTAIVTIKYVLFL), 107-127 (PVLMFFAGVLGAALFIGDAMI), 143-163 (VAPALHDYVLPISVVIILLLF), 173-193 (VSVFFGPITLVWFLMMAAAGV), 211-231 (AIGFLWNAGLIGFIVLGAIFL), 255-275 (WFAVVFPALALNYLGQGALVL), 287-307 (LMFPNWALLPMVILATAATII), 345-365 (IYLPLVNTILLTGVLALMLMF), 371-391 (LAPAYGVSITGAMVIDTILAF), 402-422 (ALTAIAVLLPLFNLELVFLGA), and 427-447 (VHHGGYVPILIAGTLITMMWT).

The protein belongs to the HAK/KUP transporter (TC 2.A.72) family.

The protein resides in the cell inner membrane. The catalysed reaction is K(+)(in) + H(+)(in) = K(+)(out) + H(+)(out). Its function is as follows. Transport of potassium into the cell. Likely operates as a K(+):H(+) symporter. This chain is Probable potassium transport system protein Kup 2, found in Rhizobium meliloti (strain 1021) (Ensifer meliloti).